We begin with the raw amino-acid sequence, 337 residues long: DNA-directed RNA polymerase subunit alpha (337 aa).

Positions 1–233 (MVREKVTVST…DLFIPFLHME (233 aa)) are alpha N-terminal domain (alpha-NTD). Residues 264–337 (NKKIALKSIF…FVIDLAKNKF (74 aa)) form an alpha C-terminal domain (alpha-CTD) region.

This sequence belongs to the RNA polymerase alpha chain family. In plastids the minimal PEP RNA polymerase catalytic core is composed of four subunits: alpha, beta, beta', and beta''. When a (nuclear-encoded) sigma factor is associated with the core the holoenzyme is formed, which can initiate transcription.

The protein localises to the plastid. The protein resides in the chloroplast. It catalyses the reaction RNA(n) + a ribonucleoside 5'-triphosphate = RNA(n+1) + diphosphate. In terms of biological role, DNA-dependent RNA polymerase catalyzes the transcription of DNA into RNA using the four ribonucleoside triphosphates as substrates. The protein is DNA-directed RNA polymerase subunit alpha of Atropa belladonna (Belladonna).